Consider the following 408-residue polypeptide: Multifunctional CCA protein (408 aa).

ATP is bound by residues Gly8 and Arg11. Positions 8 and 11 each coordinate CTP. Asp21 and Asp23 together coordinate Mg(2+). ATP is bound by residues Arg91, Arg137, and Arg140. Residues Arg91, Arg137, and Arg140 each coordinate CTP. One can recognise an HD domain in the interval 228–329 (SGVHTLMVLE…VKLFDKADFW (102 aa)).

It belongs to the tRNA nucleotidyltransferase/poly(A) polymerase family. Bacterial CCA-adding enzyme type 1 subfamily. In terms of assembly, monomer. Can also form homodimers and oligomers. Mg(2+) serves as cofactor. The cofactor is Ni(2+).

The enzyme catalyses a tRNA precursor + 2 CTP + ATP = a tRNA with a 3' CCA end + 3 diphosphate. It carries out the reaction a tRNA with a 3' CCA end + 2 CTP + ATP = a tRNA with a 3' CCACCA end + 3 diphosphate. Catalyzes the addition and repair of the essential 3'-terminal CCA sequence in tRNAs without using a nucleic acid template. Adds these three nucleotides in the order of C, C, and A to the tRNA nucleotide-73, using CTP and ATP as substrates and producing inorganic pyrophosphate. tRNA 3'-terminal CCA addition is required both for tRNA processing and repair. Also involved in tRNA surveillance by mediating tandem CCA addition to generate a CCACCA at the 3' terminus of unstable tRNAs. While stable tRNAs receive only 3'-terminal CCA, unstable tRNAs are marked with CCACCA and rapidly degraded. The sequence is that of Multifunctional CCA protein from Shewanella piezotolerans (strain WP3 / JCM 13877).